A 388-amino-acid chain; its full sequence is Succinate--CoA ligase [ADP-forming] subunit beta (388 aa).

The ATP-grasp domain maps to 9 to 245; it reads KELLKSYGLP…KSQENERELK (237 aa). Residues lysine 46, 53 to 55, glutamate 100, tyrosine 103, and glutamate 108 contribute to the ATP site; that span reads GRG. The Mg(2+) site is built by asparagine 200 and aspartate 214. Residues asparagine 265 and 322-324 contribute to the substrate site; that span reads GIV.

The protein belongs to the succinate/malate CoA ligase beta subunit family. Heterotetramer of two alpha and two beta subunits. Mg(2+) is required as a cofactor.

The enzyme catalyses succinate + ATP + CoA = succinyl-CoA + ADP + phosphate. The catalysed reaction is GTP + succinate + CoA = succinyl-CoA + GDP + phosphate. The protein operates within carbohydrate metabolism; tricarboxylic acid cycle; succinate from succinyl-CoA (ligase route): step 1/1. Succinyl-CoA synthetase functions in the citric acid cycle (TCA), coupling the hydrolysis of succinyl-CoA to the synthesis of either ATP or GTP and thus represents the only step of substrate-level phosphorylation in the TCA. The beta subunit provides nucleotide specificity of the enzyme and binds the substrate succinate, while the binding sites for coenzyme A and phosphate are found in the alpha subunit. In Psychrobacter cryohalolentis (strain ATCC BAA-1226 / DSM 17306 / VKM B-2378 / K5), this protein is Succinate--CoA ligase [ADP-forming] subunit beta.